Consider the following 244-residue polypeptide: Neurogenin-1 (244 aa).

2 disordered regions span residues 1–27 (MPAP…SSFL) and 39–82 (LAST…ARVR). The segment covering 10-27 (SDLDCSSSNSSSDLSSFL) has biased composition (low complexity). The bHLH domain occupies 93–145 (SRRVKANDRERNRMHNLNAALDALRSVLPSFPDDTKLTKIETLRFAYNYIWAL).

As to quaternary structure, efficient DNA binding requires dimerization with another bHLH protein. As to expression, expression restricted to the embryonic nervous system.

It localises to the nucleus. In terms of biological role, acts as a transcriptional regulator. Involved in the initiation of neuronal differentiation. Activates transcription by binding to the E box (5'-CANNTG-3'). Associates with chromatin to enhancer regulatory elements in genes encoding key transcriptional regulators of neurogenesis. The chain is Neurogenin-1 (Neurog1) from Mus musculus (Mouse).